We begin with the raw amino-acid sequence, 115 residues long: Large ribosomal subunit protein bL19 (115 aa).

This sequence belongs to the bacterial ribosomal protein bL19 family.

This protein is located at the 30S-50S ribosomal subunit interface and may play a role in the structure and function of the aminoacyl-tRNA binding site. The protein is Large ribosomal subunit protein bL19 of Clostridium perfringens (strain ATCC 13124 / DSM 756 / JCM 1290 / NCIMB 6125 / NCTC 8237 / Type A).